A 357-amino-acid chain; its full sequence is Alanine racemase (357 aa).

Lys-35 serves as the catalytic Proton acceptor; specific for D-alanine. Lys-35 carries the N6-(pyridoxal phosphate)lysine modification. Arg-131 is a binding site for substrate. Catalysis depends on Tyr-256, which acts as the Proton acceptor; specific for L-alanine. Met-304 contacts substrate.

Belongs to the alanine racemase family. The cofactor is pyridoxal 5'-phosphate.

The catalysed reaction is L-alanine = D-alanine. The protein operates within amino-acid biosynthesis; D-alanine biosynthesis; D-alanine from L-alanine: step 1/1. Catalyzes the interconversion of L-alanine and D-alanine. May also act on other amino acids. In Legionella pneumophila (strain Paris), this protein is Alanine racemase (alr).